Here is a 95-residue protein sequence, read N- to C-terminus: Protein translocase subunit SecE (95 aa).

The interval 1–35 is disordered; the sequence is MTDAVGSIDMPDAEDEAPESKKKSRKGGKRGKKGP. Basic residues predominate over residues 22–35; sequence KKSRKGGKRGKKGP. Residues 67–87 form a helical membrane-spanning segment; it reads VVIVFVVVMIGLVTVLDIGFA.

This sequence belongs to the SecE/SEC61-gamma family. Component of the Sec protein translocase complex. Heterotrimer consisting of SecY, SecE and SecG subunits. The heterotrimers can form oligomers, although 1 heterotrimer is thought to be able to translocate proteins. Interacts with the ribosome. Interacts with SecDF, and other proteins may be involved. Interacts with SecA.

The protein localises to the cell membrane. Functionally, essential subunit of the Sec protein translocation channel SecYEG. Clamps together the 2 halves of SecY. May contact the channel plug during translocation. This chain is Protein translocase subunit SecE, found in Streptomyces griseus.